Here is a 360-residue protein sequence, read N- to C-terminus: Alanine racemase (360 aa).

The active-site Proton acceptor; specific for D-alanine is the Lys34. N6-(pyridoxal phosphate)lysine is present on Lys34. Arg129 lines the substrate pocket. Tyr254 (proton acceptor; specific for L-alanine) is an active-site residue. Residue Met302 participates in substrate binding.

The protein belongs to the alanine racemase family. Requires pyridoxal 5'-phosphate as cofactor.

It catalyses the reaction L-alanine = D-alanine. It participates in amino-acid biosynthesis; D-alanine biosynthesis; D-alanine from L-alanine: step 1/1. Catalyzes the interconversion of L-alanine and D-alanine. May also act on other amino acids. The sequence is that of Alanine racemase (alr) from Pectobacterium atrosepticum (strain SCRI 1043 / ATCC BAA-672) (Erwinia carotovora subsp. atroseptica).